Reading from the N-terminus, the 479-residue chain is Ribulose bisphosphate carboxylase large chain (479 aa).

Residues 1 to 2 constitute a propeptide that is removed on maturation; that stretch reads MS. Proline 3 bears the N-acetylproline mark. At lysine 14 the chain carries N6,N6,N6-trimethyllysine. Residues asparagine 123 and threonine 173 each coordinate substrate. Lysine 175 functions as the Proton acceptor in the catalytic mechanism. A substrate-binding site is contributed by lysine 177. The Mg(2+) site is built by lysine 201, aspartate 203, and glutamate 204. N6-carboxylysine is present on lysine 201. Histidine 294 functions as the Proton acceptor in the catalytic mechanism. Substrate is bound by residues arginine 295, histidine 327, and serine 379.

Belongs to the RuBisCO large chain family. Type I subfamily. In terms of assembly, heterohexadecamer of 8 large chains and 8 small chains; disulfide-linked. The disulfide link is formed within the large subunit homodimers. Requires Mg(2+) as cofactor. In terms of processing, the disulfide bond which can form in the large chain dimeric partners within the hexadecamer appears to be associated with oxidative stress and protein turnover.

Its subcellular location is the plastid. The protein resides in the chloroplast. The catalysed reaction is 2 (2R)-3-phosphoglycerate + 2 H(+) = D-ribulose 1,5-bisphosphate + CO2 + H2O. The enzyme catalyses D-ribulose 1,5-bisphosphate + O2 = 2-phosphoglycolate + (2R)-3-phosphoglycerate + 2 H(+). Functionally, ruBisCO catalyzes two reactions: the carboxylation of D-ribulose 1,5-bisphosphate, the primary event in carbon dioxide fixation, as well as the oxidative fragmentation of the pentose substrate in the photorespiration process. Both reactions occur simultaneously and in competition at the same active site. In Ananas comosus (Pineapple), this protein is Ribulose bisphosphate carboxylase large chain.